A 182-amino-acid chain; its full sequence is Probable pyruvoyl-dependent arginine decarboxylase (182 aa).

At Ser-43 the chain carries Pyruvic acid (Ser).

The protein belongs to the PdaD family. The cofactor is pyruvate.

It carries out the reaction L-arginine + H(+) = agmatine + CO2. This is Probable pyruvoyl-dependent arginine decarboxylase from Chloroherpeton thalassium (strain ATCC 35110 / GB-78).